Here is an 88-residue protein sequence, read N- to C-terminus: Small ribosomal subunit protein uS17 (88 aa).

The protein belongs to the universal ribosomal protein uS17 family. As to quaternary structure, part of the 30S ribosomal subunit.

In terms of biological role, one of the primary rRNA binding proteins, it binds specifically to the 5'-end of 16S ribosomal RNA. In Nitratidesulfovibrio vulgaris (strain ATCC 29579 / DSM 644 / CCUG 34227 / NCIMB 8303 / VKM B-1760 / Hildenborough) (Desulfovibrio vulgaris), this protein is Small ribosomal subunit protein uS17.